Here is a 126-residue protein sequence, read N- to C-terminus: Glycine cleavage system H protein (126 aa).

The 82-residue stretch at 23–104 (KVRVGITDFA…YDEGWMIEII (82 aa)) folds into the Lipoyl-binding domain. Lys-64 is subject to N6-lipoyllysine.

The protein belongs to the GcvH family. The glycine cleavage system is composed of four proteins: P, T, L and H. (R)-lipoate is required as a cofactor.

In terms of biological role, the glycine cleavage system catalyzes the degradation of glycine. The H protein shuttles the methylamine group of glycine from the P protein to the T protein. The chain is Glycine cleavage system H protein from Chlorobium phaeobacteroides (strain BS1).